We begin with the raw amino-acid sequence, 832 residues long: Dolichyl-phosphate-mannose--protein mannosyltransferase 6 (832 aa).

Positions 1-44 are disordered; sequence MATGYSTGVSPFDLDENNHNDSIHHRHQNHHSQSHDSSGERDDT. Asn-20 and Asn-59 each carry an N-linked (GlcNAc...) asparagine glycan. Transmembrane regions (helical) follow at residues 135 to 155, 175 to 194, 206 to 227, 232 to 252, 266 to 286, 293 to 311, and 327 to 347; these read FYFDVHPPLGKLLIGLSGYLA, YVFMRIFNCFFGILVTPLAY, TCWLIAFMVIFEQLSLTLSKFI, MLLFFTVLTMYCLVKVHTLAI, LEIKWYILTGISIGCVCSVKW, ALVGFYTIVDLWIKFYQTF, and LIHWVVRIFTLIIIPMTIYVA. Asn-357 is a glycosylation site (N-linked (GlcNAc...) asparagine). The region spanning 383-437 is the MIR 1 domain; it reads PRSVAFGSLVTIRSQGLSPNLIHSHPHNYPQGSQEQQVTTYGFKDDNNEFLFEFG. N-linked (GlcNAc...) asparagine glycosylation occurs at Asn-453. MIR domains are found at residues 466–522 and 537–595; these read HVII…IEIQ and PSEI…IEKH. A run of 4 helical transmembrane segments spans residues 676–696, 723–743, 755–775, and 787–807; these read ITWISTIALIVCPLYLLVVGI, LLAARALLPLAGWVLHYVPFI, VPALYFAIFVAGFIVDAILNL, and IFKVVIYSTLYLVICISFWYF.

The protein belongs to the glycosyltransferase 39 family.

It is found in the endoplasmic reticulum membrane. The enzyme catalyses a di-trans,poly-cis-dolichyl beta-D-mannosyl phosphate + L-seryl-[protein] = 3-O-(alpha-D-mannosyl)-L-seryl-[protein] + a di-trans,poly-cis-dolichyl phosphate + H(+). The catalysed reaction is a di-trans,poly-cis-dolichyl beta-D-mannosyl phosphate + L-threonyl-[protein] = 3-O-(alpha-D-mannosyl)-L-threonyl-[protein] + a di-trans,poly-cis-dolichyl phosphate + H(+). Its pathway is protein modification; protein glycosylation. Protein mannosyltransferase (PMT) involved in hyphal morphogenesis and drug sensitivity. Transfers mannose from Dol-P-mannose to Ser or Thr residues on proteins. PMT1, PMT2 and PMT4 account for most of the protein-O-glycosylation activity, while PMT5 and PMT6 may specifically modulate a much narrower spectrum of target proteins. Required for biofilm formation and virulence. This chain is Dolichyl-phosphate-mannose--protein mannosyltransferase 6 (PMT6), found in Candida albicans (strain SC5314 / ATCC MYA-2876) (Yeast).